Reading from the N-terminus, the 113-residue chain is uncharacterized protein (113 aa).

The N-terminal stretch at 1 to 16 (MKCLVVLTALFGISTA) is a signal peptide. The span at 81–101 (GGNGGNGGGGNGGNNGNGNGN) shows a compositional bias: gly residues. The segment at 81–103 (GGNGGNGGGGNGGNNGNGNGNNG) is disordered.

As to expression, nacreous layer of shell (at protein level).

It localises to the secreted. This is an uncharacterized protein from Margaritifera margaritifera (Freshwater pearl mussel).